The sequence spans 186 residues: Putative 3-methyladenine DNA glycosylase (186 aa).

Belongs to the DNA glycosylase MPG family.

This is Putative 3-methyladenine DNA glycosylase from Borrelia garinii subsp. bavariensis (strain ATCC BAA-2496 / DSM 23469 / PBi) (Borreliella bavariensis).